The primary structure comprises 715 residues: Coiled-coil domain-containing protein 13 (715 aa).

Coiled-coil stretches lie at residues 16-105 and 134-458; these read KAMQ…KERD and ATKI…NVHY. The tract at residues 20 to 65 is disordered; that stretch reads EMQHKRLQKQMEKKREKELSLKSRADDQEEPLEVSDGLSLLHAGEP. Positions 28–45 are enriched in basic and acidic residues; that stretch reads KQMEKKREKELSLKSRAD. Residues Ser-258, Ser-469, and Ser-536 each carry the phosphoserine modification. Disordered regions lie at residues 482 to 541 and 607 to 645; these read EDPG…EQKG and LEPG…DPSF. The stretch at 554-608 forms a coiled coil; sequence QAAEVERDRLTEFVTVLQKRVEESNSKLLESERKLQEERHRTVVLEQHLEKIRLE. Over residues 625–637 the composition is skewed to polar residues; sequence GLPTSNNRHNPTG. Residues 653-683 adopt a coiled-coil conformation; the sequence is VESQMEELTTRLAIQVEENEMLKAALGSALR.

As to quaternary structure, interacts with PCM1, CEP290 and PCNT.

It is found in the cytoplasm. The protein localises to the cytoskeleton. It localises to the microtubule organizing center. The protein resides in the centrosome. Its subcellular location is the centriolar satellite. It is found in the cilium basal body. In terms of biological role, required for primary cilia formation and promotes the localization of the ciliopathy protein BBS4 to both centriolar satellites and cilia. This Homo sapiens (Human) protein is Coiled-coil domain-containing protein 13.